The chain runs to 870 residues: Lysosomal cholesterol signaling protein (870 aa).

The Lumenal segment spans residues 1 to 38 (MNSNLPAENLTIAVNMTKTLPTAVTHGFNSTNDPPSMS). The segment at 1–370 (MNSNLPAENL…SAWLLTFPTM (370 aa)) is PIN-like transporter. N-linked (GlcNAc...) asparagine glycosylation is found at asparagine 9, asparagine 15, and asparagine 29. The chain crosses the membrane as a helical span at residues 39–59 (ITRLFPALLECFGIVLCGYIA). The cholesterol site is built by phenylalanine 43 and tyrosine 57. Topologically, residues 60 to 79 (GRANVITSTQAKGLGNFVSR) are cytoplasmic. Residues 80–100 (FALPALLFKNMVVLNFSNVDW) form a helical membrane-spanning segment. At 101–104 (SFLY) the chain is on the lumenal side. Residues 105 to 125 (SILIAKASVFFIVCVLTLLVA) traverse the membrane as a helical segment. The Cytoplasmic segment spans residues 126-133 (SPDSRFSK). The chain crosses the membrane as a discontinuously helical span at residues 134 to 154 (AGLFPIFATQSNDFALGYPIV). At 155–167 (EALYQTTYPEYLQ) the chain is on the lumenal side. Residues 168-188 (YIYLVAPISLMMLNPIGFIFC) traverse the membrane as a helical segment. Residues 189–213 (EIQKWKDTQNASQNKIKIVGLGLLR) lie on the Cytoplasmic side of the membrane. Residues 214 to 234 (VLQNPIVFMVFIGIAFNFILD) traverse the membrane as a discontinuously helical segment. Residues 235–243 (RKVPVYVEN) are Lumenal-facing. Residues 244-264 (FLDGLGNSFSGSALFYLGLTM) form a discontinuously helical membrane-spanning segment. Residues 265–273 (VGKIKRLKK) lie on the Cytoplasmic side of the membrane. Cholesterol-binding residues include glycine 266, lysine 267, and isoleucine 268. The chain crosses the membrane as a helical span at residues 274–294 (SAFVVLILLITAKLLVLPLLC). Over 295 to 315 (REMVELLDKGDSVVNHTSLSN) the chain is Lumenal. A glycan (N-linked (GlcNAc...) asparagine) is linked at asparagine 309. A discontinuously helical membrane pass occupies residues 316–336 (YAFLYGVFPVAPGVAIFATQF). Residues 337-346 (NMEVEIITSG) lie on the Cytoplasmic side of the membrane. The chain crosses the membrane as a helical span at residues 347 to 367 (MVISTFVSAPIMYVSAWLLTF). Residues 368–381 (PTMDPKPLAYAIQN) are Lumenal-facing. The GPCR stretch occupies residues 380 to 717 (QNVSFDISIV…FGIFGLDKHL (338 aa)). Residue asparagine 381 is glycosylated (N-linked (GlcNAc...) asparagine). The helical transmembrane segment at 382–402 (VSFDISIVSLISLIWSLAILL) threads the bilayer. Over 403 to 414 (LSKKYKQLPHML) the chain is Cytoplasmic. A helical transmembrane segment spans residues 415–435 (TTNLLIAQSIVCAGMMIWNFV). The Lumenal segment spans residues 436-438 (KEK). A helical transmembrane segment spans residues 439 to 459 (NFVGQILVFVLLYSSLYSTYL). The Cytoplasmic segment spans residues 460–480 (WTGLLAISLFLLKKRERVQIP). The helical transmembrane segment at 481–501 (VGIIIISGWGIPALLVGVLLI) threads the bilayer. The Lumenal segment spans residues 502 to 520 (TGKHNGDSIDSAFFYGKEQ). A helical membrane pass occupies residues 521–541 (MITTAVTLFCSILIAGISLMC). The Cytoplasmic segment spans residues 542–660 (MNQTAQAGSY…GDQQLTRHVL (119 aa)). Arginine 657 contacts cholesterol. The helical transmembrane segment at 661-681 (LCLLLIIGLFANLSSCLWWLF) threads the bilayer. Residues 682–691 (NQEPGRLYVE) lie on the Lumenal side of the membrane. The helical transmembrane segment at 692–712 (LQFFCAVFNFGQGFISFGIFG) threads the bilayer. Over 713-870 (LDKHLIILPF…SSPPSHSPKT (158 aa)) the chain is Cytoplasmic. One can recognise a DEP domain in the interval 757-835 (YHRDLCIRNI…DEYLFYRFLQ (79 aa)).

In terms of assembly, homodimer; via the transporter region and DEP domain. Interacts with the GATOR1 complex and prevents interaction between GATOR1 and KICSTOR; this interaction is disrupted upon cholesterol starvation.

Its subcellular location is the lysosome membrane. In terms of biological role, cholesterol-binding protein that acts as a regulator of mTORC1 signaling pathway. Acts as a sensor of cholesterol to signal cholesterol sufficiency to mTORC1: in presence of cholesterol, binds cholesterol, leading to disruption of the interaction between the GATOR1 and KICSTOR complexes and promotion of mTORC1 signaling. Upon cholesterol starvation, GPR155/LYCHOS is unable to perturb the association between GATOR1 and KICSTOR, leading to mTORC1 signaling inhibition. Binds indole-3-acetic acid and may play a role in tryptophan metabolism. This Homo sapiens (Human) protein is Lysosomal cholesterol signaling protein.